Reading from the N-terminus, the 244-residue chain is MKLTKTSRPTTPQPGLISTWLLRPLLLLLAIALLYQSWFLLHIIYWRTYHPTTSAFMQDRLETMHRQNPAAKLQHRWVDYEQISNHLKRAVIATEDARFMQHQGFDYKAIEVAWKKNLKQRKLAAGGSTISQQLAKNLFLSSEKTVWRKLQETLITLILEEFLSKRRILEIYLNVIEWGEGVFGIEAAARHYFGIPASSLAPEQSAWLASIISNPRFYDTHRQSPRLLKKARIILSRLPTAKIP.

A helical membrane pass occupies residues 25–45 (LLLLLAIALLYQSWFLLHIIY).

This sequence belongs to the glycosyltransferase 51 family.

The protein resides in the cell inner membrane. The enzyme catalyses [GlcNAc-(1-&gt;4)-Mur2Ac(oyl-L-Ala-gamma-D-Glu-L-Lys-D-Ala-D-Ala)](n)-di-trans,octa-cis-undecaprenyl diphosphate + beta-D-GlcNAc-(1-&gt;4)-Mur2Ac(oyl-L-Ala-gamma-D-Glu-L-Lys-D-Ala-D-Ala)-di-trans,octa-cis-undecaprenyl diphosphate = [GlcNAc-(1-&gt;4)-Mur2Ac(oyl-L-Ala-gamma-D-Glu-L-Lys-D-Ala-D-Ala)](n+1)-di-trans,octa-cis-undecaprenyl diphosphate + di-trans,octa-cis-undecaprenyl diphosphate + H(+). It participates in cell wall biogenesis; peptidoglycan biosynthesis. Its function is as follows. Peptidoglycan polymerase that catalyzes glycan chain elongation from lipid-linked precursors. In Nitrosomonas eutropha (strain DSM 101675 / C91 / Nm57), this protein is Biosynthetic peptidoglycan transglycosylase.